The sequence spans 134 residues: Replication enhancer protein (134 aa).

Belongs to the geminiviridae replication enhancer protein family. As to quaternary structure, homooligomer. Interacts with the replication-associated protein (REP). Interacts with host proliferating cell nuclear antigen (PCNA). Interacts with host retinoblastoma-related protein 1 (RBR1), and may thereby deregulate the host cell cycle. Oligomerization and interaction with PCNA are necessary for optimal replication enhancement.

Increases viral DNA accumulation. Enhances infectivity and symptom expression. This Cynanchum acutum (Tomato) protein is Replication enhancer protein.